The primary structure comprises 351 residues: S-adenosylmethionine:tRNA ribosyltransferase-isomerase (351 aa).

Belongs to the QueA family. In terms of assembly, monomer.

It is found in the cytoplasm. It catalyses the reaction 7-aminomethyl-7-carbaguanosine(34) in tRNA + S-adenosyl-L-methionine = epoxyqueuosine(34) in tRNA + adenine + L-methionine + 2 H(+). The protein operates within tRNA modification; tRNA-queuosine biosynthesis. Its function is as follows. Transfers and isomerizes the ribose moiety from AdoMet to the 7-aminomethyl group of 7-deazaguanine (preQ1-tRNA) to give epoxyqueuosine (oQ-tRNA). This is S-adenosylmethionine:tRNA ribosyltransferase-isomerase from Phocaeicola vulgatus (strain ATCC 8482 / DSM 1447 / JCM 5826 / CCUG 4940 / NBRC 14291 / NCTC 11154) (Bacteroides vulgatus).